Here is a 150-residue protein sequence, read N- to C-terminus: Deoxyuridine 5'-triphosphate nucleotidohydrolase (150 aa).

Substrate contacts are provided by residues 69–71, asparagine 82, 86–88, and methionine 96; these read RSG and LID.

It belongs to the dUTPase family. It depends on Mg(2+) as a cofactor.

It catalyses the reaction dUTP + H2O = dUMP + diphosphate + H(+). It functions in the pathway pyrimidine metabolism; dUMP biosynthesis; dUMP from dCTP (dUTP route): step 2/2. Its function is as follows. This enzyme is involved in nucleotide metabolism: it produces dUMP, the immediate precursor of thymidine nucleotides and it decreases the intracellular concentration of dUTP so that uracil cannot be incorporated into DNA. The chain is Deoxyuridine 5'-triphosphate nucleotidohydrolase from Acinetobacter baylyi (strain ATCC 33305 / BD413 / ADP1).